Here is a 948-residue protein sequence, read N- to C-terminus: Probable DNA-directed RNA polymerase (948 aa).

Residues aspartate 600, lysine 680, and aspartate 853 contribute to the active site.

This sequence belongs to the phage and mitochondrial RNA polymerase family.

The protein resides in the mitochondrion. It carries out the reaction RNA(n) + a ribonucleoside 5'-triphosphate = RNA(n+1) + diphosphate. Functionally, DNA-dependent RNA polymerase catalyzes the transcription of DNA into RNA using the four ribonucleoside triphosphates as substrates. This is Probable DNA-directed RNA polymerase from Podospora anserina (Pleurage anserina).